Consider the following 333-residue polypeptide: MTGIPTYHVLALSGGGYRGLYTATVLAELETVLGRPIASHFDLICGTSAGGMLALGLAAEIPAYELKALFEEQGSRIFGCRSLPRRLLGFWLTAKHDSAGLKEVLTERFQGTTIGDLKHRVLVPAVNYSTGRGQFFKTPHHPSFELDHRMKVVDVALATAAAPVYFPLARNDRGVFADGGLVGNAPGLFGLHEVKTFLAPKQDALVRVLAIGTMTIGATVRGGASLDRGFGKWRGGLFDLVISAQESSVDHMLRQALGNNYFQIDDKATPDQSKDVKALDRVSIGATNTLKDRGNHAAQRALGDPLFQPFRAHQADAPIFYHGPNKNVPEAAC.

One can recognise a PNPLA domain in the interval 10-191 (LALSGGGYRG…VGNAPGLFGL (182 aa)). The short motif at 14–19 (GGGYRG) is the GXGXXG element. A GXSXG motif is present at residues 46-50 (GTSAG). The active-site Nucleophile is the Ser48. The active-site Proton acceptor is the Asp178. The short motif at 178 to 180 (DGG) is the DGA/G element.

The protein belongs to the patatin family.

The catalysed reaction is a 1,2-diacyl-sn-glycero-3-phosphocholine + H2O = a 2-acyl-sn-glycero-3-phosphocholine + a fatty acid + H(+). The enzyme catalyses 1,2-di-(9Z-octadecenoyl)-sn-glycero-3-phosphoethanolamine + 2 H2O = sn-glycero-3-phosphoethanolamine + 2 (9Z)-octadecenoate + 2 H(+). Its activity is regulated as follows. Phospholipase activity is specifically activated upon cGAMP binding, which is produced by the cognate cyclic nucleotide synthase encoded in the same operon. Is not activated by cyclic dinucleotides 2',3'-cGAMP, c-diAMP or 3',3'-c-diGMP. Effector phospholipase of a CBASS antiviral system. CBASS (cyclic oligonucleotide-based antiphage signaling system) provides immunity against bacteriophages. The CD-NTase protein (CdnA) synthesizes cyclic nucleotides in response to infection; these serve as specific second messenger signals. The signals activate a diverse range of effectors, leading to bacterial cell death and thus abortive phage infection. A type II-A(GA) CBASS system. Functionally, phospholipase that is activated upon binding to the cyclic dinucleotide (CDN) second messenger 3',3'-cyclic GMP-AMP (cGAMP). Degrades phospholipids in the cell membrane. In terms of biological role, the capV-cdnA-cap2-cap3 operon provides about 10(4)-fold protection in strain BWHPSA011 against infection by phage PaMx41. In P.aeruginosa strain PAO1 it confers protection against phages PaMx41 and JBD18 but not JBD67 (JBD18 and JBD67 do not replicate in BWHPSA011 / Pa011). When acb2 in JBD67 is deleted this CBASS operon then protects against JDB67 also. This CBASS system limits prophage induction of lysogenized JBD67 as well as viral lytic replication. The polypeptide is cGAMP-activated phospholipase (Pseudomonas aeruginosa (strain BWHPSA011 / Pa011)).